Reading from the N-terminus, the 316-residue chain is MSAMRRCTCFIICLLTSYTYGTTELVEYTRGDIEFDSSNGEKIIDISTTKGIRCEWKVSSDYYTACFKWKFIWDQVDKYEVAGFSGQITVNYTTDSEGQKTRTVKVNLTDPGGEIWYNVSRSRYLSTYYASYNYTLEPQKRHMEAMELDKYFAPVDDRDAVLIVEGKKLHVSSCFLSFHSTYFHDLFEYDNSTSLLNIEIPVEGVSYEDLGLLLSVVHSTATFPNDGNSKKLLELASQFQTPYVLGLVENHLLTNTFAWNETLMLLADKYGLMRLLGKSIRRIDSIEKARQLKDSVFLELSDSAKVKVAYHMIQLL.

The first 21 residues, 1–21, serve as a signal peptide directing secretion; sequence MSAMRRCTCFIICLLTSYTYG. 6 N-linked (GlcNAc...) asparagine glycosylation sites follow: N91, N107, N118, N133, N191, and N260. Residues 158–226 enclose the BTB domain; that stretch reads RDAVLIVEGK…VHSTATFPND (69 aa).

It localises to the secreted. The sequence is that of BTB/POZ domain-containing protein Y57A10B.3 (btb-14) from Caenorhabditis elegans.